A 325-amino-acid chain; its full sequence is tRNA U34 carboxymethyltransferase (325 aa).

Carboxy-S-adenosyl-L-methionine is bound by residues lysine 91, tryptophan 105, lysine 110, glycine 130, 152–154, 181–182, methionine 197, tyrosine 201, and arginine 316; these read DPS and ME.

Belongs to the class I-like SAM-binding methyltransferase superfamily. CmoB family. Homotetramer.

It catalyses the reaction carboxy-S-adenosyl-L-methionine + 5-hydroxyuridine(34) in tRNA = 5-carboxymethoxyuridine(34) in tRNA + S-adenosyl-L-homocysteine + H(+). In terms of biological role, catalyzes carboxymethyl transfer from carboxy-S-adenosyl-L-methionine (Cx-SAM) to 5-hydroxyuridine (ho5U) to form 5-carboxymethoxyuridine (cmo5U) at position 34 in tRNAs. The chain is tRNA U34 carboxymethyltransferase from Saccharophagus degradans (strain 2-40 / ATCC 43961 / DSM 17024).